The sequence spans 129 residues: Iron-sulfur cluster assembly 1 homolog, mitochondrial (129 aa).

Residues 1 to 12 (MSASLVRATVRA) constitute a mitochondrion transit peptide. The Fe cation site is built by Cys-57, Cys-121, and Cys-123.

This sequence belongs to the HesB/IscA family. As to quaternary structure, interacts with CRY2, but not with CRY1 (in vitro).

The protein resides in the mitochondrion. Functionally, involved in the maturation of mitochondrial 4Fe-4S proteins functioning late in the iron-sulfur cluster assembly pathway. Probably involved in the binding of an intermediate of Fe/S cluster assembly. This is Iron-sulfur cluster assembly 1 homolog, mitochondrial (ISCA1) from Bos taurus (Bovine).